Here is a 729-residue protein sequence, read N- to C-terminus: Zorya protein ZorA (729 aa).

The next 3 membrane-spanning stretches (helical) occupy residues 20 to 40 (PATVIGLVSFAFLCFIFFYFF), 135 to 155 (LPGILTGVGIIGTFYGLMIGL), and 177 to 197 (VLYAFLGSAFAITFSILITWL).

The protein belongs to the MotA family.

It is found in the cell inner membrane. Its function is as follows. Component of antiviral defense system Zorya type I, composed of ZorA, ZorB, ZorC and ZorD. Expression of Zorya type I in E.coli (strain MG1655) confers 10,000-fold resistance to phage SECphi27, 100-fold resistance to lambda, and 10-fold resistance to T7. While most T7 infected Zorya-containing cells undergo abortive infection, a minority produce viable phage progeny. These eventually accumulate to a high multiplicity of infection, leading to culture collapse by 2 hours after initial infection. ZorA and ZorB probably assemble in the cell inner membrane and exert their effect there. This chain is Zorya protein ZorA, found in Escherichia coli O139:H28 (strain E24377A / ETEC).